A 555-amino-acid chain; its full sequence is MAQLSDLEIANLSKLKPISEIARKVGITEDALEPYGHYKAKIDINQIQEQEKKGKVVLVTAMSPTPAGEGKSTVTVGLADAFNKLNHNVTVALREPALGPTFGIKGGATGGGYAQVLPMEDINLHFNGDFHAITTANNALSAFIDNHLHQGNELGIDQRRIEWKRVLDMNDRALRHVNVGLGGTTHGVPREDGFNITVASEIMAILCLSRNIKDLKEKISRITIGYTRHHKPITVSDLKVEGALTLILKDAIKPNLVQTIEGTPALVHGGPFANIAHGCNSILATETARNLSDIVVTEAGFGSDLGAEKFMNIKAREAGFDPSAVVVVATIRALKMHGGVAKDQLQHENIEAVEAGLVNLERHVNNIKKYGVEPIVALNAFIHDTPSETACVKQWAKDNQVRIALTEVWEKGGEGGIELANQVFDVMQEPQNFKHLYELKQPLEAKIETIVKEIYGGSKVNFSSKAQKQLKQFKENGWDEYPICMAKTQYSFSDDQTLLGAPNDFEITIRELEAKTGAGFIVALTGAIMTMPGLPKKPAALNMDVTDDGKAIGLF.

65–72 (TPAGEGKS) is an ATP binding site.

It belongs to the formate--tetrahydrofolate ligase family.

It catalyses the reaction (6S)-5,6,7,8-tetrahydrofolate + formate + ATP = (6R)-10-formyltetrahydrofolate + ADP + phosphate. Its pathway is one-carbon metabolism; tetrahydrofolate interconversion. This Staphylococcus epidermidis (strain ATCC 35984 / DSM 28319 / BCRC 17069 / CCUG 31568 / BM 3577 / RP62A) protein is Formate--tetrahydrofolate ligase.